Here is a 453-residue protein sequence, read N- to C-terminus: Retroviral integration site protein Fli-1 homolog (453 aa).

Positions 111–197 (PPPPNMTTNE…SHLNYLRDSS (87 aa)) constitute a PNT domain. Over residues 201-214 (GYNTQAHTDQSSRL) the composition is skewed to polar residues. The interval 201–273 (GYNTQAHTDQ…YQILGPTSSR (73 aa)) is disordered. Basic and acidic residues predominate over residues 215–226 (TAKEDPSYEAVR). Polar residues-rich tracts occupy residues 230-239 (WGNSMSSPVT) and 246-273 (GTQNVNKSGDQQRSQPDPYQILGPTSSR). A DNA-binding region (ETS) is located at residues 282–362 (IQLWQFLLEL…HGKRYAYKFD (81 aa)).

It belongs to the ETS family.

The protein localises to the nucleus. In Xenopus laevis (African clawed frog), this protein is Retroviral integration site protein Fli-1 homolog (fli1).